The following is a 460-amino-acid chain: Ammonium transporter Rh type C (460 aa).

The Cytoplasmic segment spans residues 1-9 (MAWNTNLRW). A helical transmembrane segment spans residues 10–30 (RLPLTCLLLQVIMVILFGVFV). The Extracellular portion of the chain corresponds to 31-61 (RYDPDADAHWIDERLGRNISSDMDNEFYYRY). Asparagine 48 is a glycosylation site (N-linked (GlcNAc...) asparagine). A helical transmembrane segment spans residues 62-82 (PSFQDVHVMIFVGFGFLMTFL). Residues 83–86 (QRYG) are Cytoplasmic-facing. The chain crosses the membrane as a helical span at residues 87-107 (FSSVGFNFLLAAFGIQWALLM). Over 108–125 (QGWLHSFHSGYIVLGVEN) the chain is Extracellular. Residues 126–145 (LINADFCVGSVCVAFGAVLG) form a helical membrane-spanning segment. Topologically, residues 146-151 (KVSPVQ) are cytoplasmic. Residues 152 to 174 (LLIMTLFQVTLFSVNEFILLNLL) traverse the membrane as a helical segment. Residues 175–179 (EVKDA) lie on the Extracellular side of the membrane. A helical transmembrane segment spans residues 180 to 200 (GGSMTIHTFGAYFGLTVTWIL). Topologically, residues 201–219 (YRPNLYQSKERQSSVYHSD) are cytoplasmic. A helical membrane pass occupies residues 220–240 (LFAMIGTLFLWMYWPSFNSAV). At 241–251 (SHHGDAQHRAA) the chain is on the extracellular side. Residues 252–272 (INTYCSLAACVLTSVALSSAL) form a helical membrane-spanning segment. At 273-285 (HKKGKLDMVHIQN) the chain is on the cytoplasmic side. The chain crosses the membrane as a helical span at residues 286–306 (ATLAGGVAVGTAAEMMLMPYG). Residue serine 307 is a topological domain, extracellular. A helical transmembrane segment spans residues 308 to 328 (LIVGFICGIISTLGFVYLTPF). Over 329-340 (LESRLRIQDTCG) the chain is Cytoplasmic. A helical transmembrane segment spans residues 341 to 361 (IHNLHGMPGIIGGIVGAVTAA). Residues 362–396 (SANTQQYGQKGLAHAFDIDATKTTWTASMQGSFQA) are Extracellular-facing. A helical membrane pass occupies residues 397–417 (AGLFVSLAMALVGGLIVGVIL). At 418–460 (KLPFWGQPADENCFEDAIYWEIPEDQKSLVSRSEDPTLRPTEP) the chain is on the cytoplasmic side.

It belongs to the ammonium transporter (TC 2.A.49) family. Rh subfamily. Homotrimer. N-glycosylated.

It localises to the cell membrane. Its subcellular location is the apical cell membrane. It catalyses the reaction NH4(+)(in) = NH4(+)(out). It carries out the reaction methylamine(out) = methylamine(in). The catalysed reaction is CO2(out) = CO2(in). Functionally, ammonium transporter involved in the maintenance of acid-base homeostasis. Transports ammonium and its related derivative methylammonium across the plasma membrane of epithelial cells likely contributing to renal transepithelial ammonia transport and ammonia metabolism. Postulated to primarily mediate an electroneutral bidirectional transport of NH3 ammonia species according to a mechanism that implies interaction of an NH4(+) ion with acidic residues of the pore entry followed by dissociation of NH4(+) into NH3 and H(+). As a result NH3 transits through the central pore and is protonated on the extracellular side reforming NH4(+). May act as a CO2 channel providing for renal acid secretion. The protein is Ammonium transporter Rh type C (RHCG) of Sus scrofa (Pig).